Here is a 393-residue protein sequence, read N- to C-terminus: Cysteine protease ATG4B (393 aa).

Met-1 is subject to N-acetylmethionine. Residue Ser-34 is modified to Phosphoserine; by PKB/AKT1 and PKB/AKT2. The active-site Nucleophile is the Cys-74. Cys-189 is subject to S-nitrosocysteine. Active-site residues include Asp-278 and His-280. S-nitrosocysteine occurs at positions 292 and 301. An intrachain disulfide couples Cys-292 to Cys-361. Ser-316 is modified (phosphoserine; by ULK1). Ser-383 is modified (phosphoserine; by STK26). The short motif at 388–391 (FEIL) is the LIR element. Ser-392 bears the Phosphoserine mark.

Belongs to the peptidase C54 family. Interacts with PFKP; promoting phosphorylation of ATG4B at Ser-34. Interacts with GBP7. Post-translationally, phosphorylation at Ser-383 and Ser-392 promotes autophagy by increasing protein delipidation activity without affecting proteolytic activation of ATG8 proteins. Phosphorylation at Ser-316 by ULK1 inhibits autophagy by decreasing both proteolytic activation and delipidation activities. Phosphorylation at Ser-316 is dephosphorylated by protein phosphatase 2A (PP2A). Phosphorylation at Ser-34 by AKT2 promotes its hydrolase activity, leading to increased proteolytic activation and delipidation of ATG8 family proteins. Phosphorylation at Ser-34 by AKT1 promotes mitochondrial localization and inhibition of the F1F0-ATP synthase activity, leading to elevation of mitochondrial reactive oxygen species (ROS). Ubiquitinated by RNF5, leading to its degradation by the proteasome. In terms of processing, S-nitrosylation at Cys-189 and Cys-292 in response to high glucose decreases both proteolytic activation and delipidation activities. Post-translationally, O-glycosylated by OGT, leading to increase protease activity, thereby promoting the proteolytic activation of ATG8 family proteins. Forms reversible intrachain disulfide bonds in response to oxidative stress. Forms interchain disulfide bonds, leading to formation of homooligomers in response to oxidation.

It localises to the cytoplasm. The protein resides in the cytosol. It is found in the cytoplasmic vesicle. The protein localises to the autophagosome. Its subcellular location is the endoplasmic reticulum. It localises to the mitochondrion. The enzyme catalyses [protein]-C-terminal L-amino acid-glycyl-phosphatidylethanolamide + H2O = [protein]-C-terminal L-amino acid-glycine + a 1,2-diacyl-sn-glycero-3-phosphoethanolamine. It carries out the reaction [protein]-C-terminal L-amino acid-glycyl-phosphatidylserine + H2O = [protein]-C-terminal L-amino acid-glycine + a 1,2-diacyl-sn-glycero-3-phospho-L-serine. Inhibited by N-ethylmaleimide. Redox-regulated during autophagy since reducing conditions activate ATG4A whereas an oxidizing environment such as the presence of H(2)O(2) inhibits its activity. The cysteine protease activity compounds is inhibited by styrylquinoline compounds 4-28 and LV-320. Functionally, cysteine protease that plays a key role in autophagy by mediating both proteolytic activation and delipidation of ATG8 family proteins. Required for canonical autophagy (macroautophagy), non-canonical autophagy as well as for mitophagy. The protease activity is required for proteolytic activation of ATG8 family proteins: cleaves the C-terminal amino acid of ATG8 proteins MAP1LC3A, MAP1LC3B, MAP1LC3C, GABARAPL1, GABARAPL2 and GABARAP, to reveal a C-terminal glycine. Exposure of the glycine at the C-terminus is essential for ATG8 proteins conjugation to phosphatidylethanolamine (PE) and insertion to membranes, which is necessary for autophagy. Protease activity is also required to counteract formation of high-molecular weight conjugates of ATG8 proteins (ATG8ylation): acts as a deubiquitinating-like enzyme that removes ATG8 conjugated to other proteins, such as ATG3. In addition to the protease activity, also mediates delipidation of ATG8 family proteins. Catalyzes delipidation of PE-conjugated forms of ATG8 proteins during macroautophagy. Also involved in non-canonical autophagy, a parallel pathway involving conjugation of ATG8 proteins to single membranes at endolysosomal compartments, by catalyzing delipidation of ATG8 proteins conjugated to phosphatidylserine (PS). Compared to other members of the family (ATG4A, ATG4C or ATG4C), constitutes the major protein for proteolytic activation of ATG8 proteins, while it displays weaker delipidation activity than other ATG4 paralogs. Involved in phagophore growth during mitophagy independently of its protease activity and of ATG8 proteins: acts by regulating ATG9A trafficking to mitochondria and promoting phagophore-endoplasmic reticulum contacts during the lipid transfer phase of mitophagy. The polypeptide is Cysteine protease ATG4B (Homo sapiens (Human)).